We begin with the raw amino-acid sequence, 588 residues long: MKNNLPIKSRLLYKRLLSYVKPFWPVLLLGVLANILYSGIDAGFTYMTKLFLDKSFITIDLDFVKQIPLIVLIGITLRGLVSSLGSYCMTWVARSVVKVLRQTVFSHIIHLPADYYDEATSGQLLSKILYDVEQVAQVSADALTDFIQNICLVIGLLTVMMVICWQLSLMFLLTIPFVGIIVNYTNKRVRRISHKVQKTMGEVTEIASEAIEGYRVVRIFGGERYEITKFNKATEYSRKNDMKVAISKAINVSGVQLVIAIGIAMIIMAAIHLSTVITISAGSFLAIIAAMLQLIKPMKTLTTLNATIQRGLAGAESVFNLLDLPLERNNGLILKEKVRGEIEFKHVYHAYRQSQNILHDVNFVIEAGTSVALVGHSGSGKTTIASLLPRFYELSQGMITLDGMPIQQLSLESLRKQISLVSQNVTLFNDTLANNIAYGRFDASREQIITAAKLAYADEFIKQLPDGYDTRVGENGVLLSGGQRQRIAIARAILKDAPILILDEATSALDSESEHYIQAALEQVMKGRTTLIIAHRLSTIKHAHKIIVLQHGRIVEQGSHQELLDMDGHYAQLYKVQQFGRINEEVVV.

Transmembrane regions (helical) follow at residues 23–43, 56–76, 141–161, 162–182, 257–277, and 278–298; these read FWPV…IDAG, FITI…IGIT, DALT…TVMM, VICW…GIIV, LVIA…STVI, and TISA…IKPM. One can recognise an ABC transmembrane type-1 domain in the interval 28 to 310; it reads LLGVLANILY…LTTLNATIQR (283 aa). The 235-residue stretch at 342–576 folds into the ABC transporter domain; the sequence is IEFKHVYHAY…DGHYAQLYKV (235 aa). Residue 375 to 382 participates in ATP binding; it reads GHSGSGKT.

It belongs to the ABC transporter superfamily. Lipid exporter (TC 3.A.1.106) family. As to quaternary structure, homodimer.

Its subcellular location is the cell inner membrane. It carries out the reaction ATP + H2O + lipid A-core oligosaccharideSide 1 = ADP + phosphate + lipid A-core oligosaccharideSide 2.. Involved in lipopolysaccharide (LPS) biosynthesis. Translocates lipid A-core from the inner to the outer leaflet of the inner membrane. Transmembrane domains (TMD) form a pore in the inner membrane and the ATP-binding domain (NBD) is responsible for energy generation. This Legionella pneumophila (strain Paris) protein is ATP-dependent lipid A-core flippase.